The chain runs to 201 residues: MNETNDNDIDQLIYLFSKLPGLGIRSARRIALYLLQDKDVRLKSLINNLVEIDKKIVKCEICGNMDTENMCRICSSEYRDKSIIAIVETVAELWAMERSGNFKGLYHVLGHNLSAASRQNPSILRLPELLTRCFAENIKEVIIATNSTLEGQTTAYFITEYLKEHPAKISRLASGIPIGGELDYLDEGTVSAAINLRQPFE.

Residues 59–74 (CEICGNMDTENMCRIC) form a C4-type zinc finger. One can recognise a Toprim domain in the interval 82–177 (SIIAIVETVA…KISRLASGIP (96 aa)).

This sequence belongs to the RecR family.

Its function is as follows. May play a role in DNA repair. It seems to be involved in an RecBC-independent recombinational process of DNA repair. It may act with RecF and RecO. The chain is Recombination protein RecR from Rickettsia africae (strain ESF-5).